The chain runs to 347 residues: Heat-inducible transcription repressor HrcA (347 aa).

It belongs to the HrcA family.

In terms of biological role, negative regulator of class I heat shock genes (grpE-dnaK-dnaJ and groELS operons). Prevents heat-shock induction of these operons. This Laribacter hongkongensis (strain HLHK9) protein is Heat-inducible transcription repressor HrcA.